The primary structure comprises 481 residues: Glutamyl-tRNA(Gln) amidotransferase subunit A (481 aa).

Catalysis depends on charge relay system residues lysine 74 and serine 149. Serine 173 serves as the catalytic Acyl-ester intermediate.

It belongs to the amidase family. GatA subfamily. Heterotrimer of A, B and C subunits.

It carries out the reaction L-glutamyl-tRNA(Gln) + L-glutamine + ATP + H2O = L-glutaminyl-tRNA(Gln) + L-glutamate + ADP + phosphate + H(+). Functionally, allows the formation of correctly charged Gln-tRNA(Gln) through the transamidation of misacylated Glu-tRNA(Gln) in organisms which lack glutaminyl-tRNA synthetase. The reaction takes place in the presence of glutamine and ATP through an activated gamma-phospho-Glu-tRNA(Gln). The sequence is that of Glutamyl-tRNA(Gln) amidotransferase subunit A from Francisella philomiragia subsp. philomiragia (strain ATCC 25017 / CCUG 19701 / FSC 153 / O#319-036).